The following is a 90-amino-acid chain: Small ribosomal subunit protein uS19 (90 aa).

It belongs to the universal ribosomal protein uS19 family.

Protein S19 forms a complex with S13 that binds strongly to the 16S ribosomal RNA. The chain is Small ribosomal subunit protein uS19 from Hydrogenovibrio crunogenus (strain DSM 25203 / XCL-2) (Thiomicrospira crunogena).